The primary structure comprises 402 residues: MLAKMSFMQNVKNIQEVEVSHKRVLIRVDFNVPLDENLNITDDTRIRESLPTIQYCIDNKAKDIILVSHLGRPKGVEEKLSLKPFLKRLERLLNHEVVFSQNIVQLKQALNENAPTRIFLLENIRFLRGEEENDENLAKDLASLCDVFVNDAFGTSHRKHASTYGTAKFAPIKVSGFLLKKEIDSFYQAFNHPLRPLLLIVGGAKVSSKLTLLKNILDLIDKLIIAGAMSNTFLKALGYDVQDSSVEDALINDALELLQSAKEKKVKVYLPIDAVTTDDILNPKHIKISPVQDIEPKHKIADIGPASLKLFSEVIESAPTILWNGPLGVHEKQEFARGTTFLAHKIADTYAFSLIGGGDTIDAINRAGEKDNMSFISTGGGASLELLEGKILPCFEVLDKRH.

Substrate is bound by residues 29–31, arginine 45, 69–72, arginine 125, and arginine 158; these read DFN and HLGR. ATP contacts are provided by residues lysine 209, glutamate 331, and 357-360; that span reads GGDT.

It belongs to the phosphoglycerate kinase family.

The protein localises to the cytoplasm. The enzyme catalyses (2R)-3-phosphoglycerate + ATP = (2R)-3-phospho-glyceroyl phosphate + ADP. Its pathway is carbohydrate degradation; glycolysis; pyruvate from D-glyceraldehyde 3-phosphate: step 2/5. This is Phosphoglycerate kinase (pgk) from Helicobacter pylori (strain ATCC 700392 / 26695) (Campylobacter pylori).